We begin with the raw amino-acid sequence, 258 residues long: Hydroxyacylglutathione hydrolase (258 aa).

Residues H55, H57, D59, H60, H115, D132, and H170 each coordinate Zn(2+).

The protein belongs to the metallo-beta-lactamase superfamily. Glyoxalase II family. Monomer. Zn(2+) is required as a cofactor.

It carries out the reaction an S-(2-hydroxyacyl)glutathione + H2O = a 2-hydroxy carboxylate + glutathione + H(+). It participates in secondary metabolite metabolism; methylglyoxal degradation; (R)-lactate from methylglyoxal: step 2/2. Its function is as follows. Thiolesterase that catalyzes the hydrolysis of S-D-lactoyl-glutathione to form glutathione and D-lactic acid. The chain is Hydroxyacylglutathione hydrolase from Shewanella denitrificans (strain OS217 / ATCC BAA-1090 / DSM 15013).